The sequence spans 453 residues: Allantoinase (453 aa).

Positions 59, 61, 146, 186, 242, and 315 each coordinate Zn(2+). K146 carries the post-translational modification N6-carboxylysine.

Belongs to the metallo-dependent hydrolases superfamily. Allantoinase family. As to quaternary structure, homotetramer. Zn(2+) serves as cofactor. Carboxylation allows a single lysine to coordinate two zinc ions.

The catalysed reaction is (S)-allantoin + H2O = allantoate + H(+). Its pathway is nitrogen metabolism; (S)-allantoin degradation; allantoate from (S)-allantoin: step 1/1. Catalyzes the conversion of allantoin (5-ureidohydantoin) to allantoic acid by hydrolytic cleavage of the five-member hydantoin ring. The chain is Allantoinase from Escherichia coli (strain 55989 / EAEC).